The primary structure comprises 362 residues: Heme A synthase (362 aa).

The next 5 membrane-spanning stretches (helical) occupy residues 12-32 (AVRI…LVGG), 102-122 (VIGA…DLGG), 128-148 (LWII…MVAS), 159-179 (VRLA…VWTL), and 198-218 (AAVL…VAGL). H262 is a binding site for heme. The next 3 membrane-spanning stretches (helical) occupy residues 264-281 (MLAY…IDAW), 289-309 (GALA…VTLL), and 312-332 (VPIG…TLAV). H320 is a binding site for heme.

It belongs to the COX15/CtaA family. Type 2 subfamily. In terms of assembly, interacts with CtaB. The cofactor is heme b.

Its subcellular location is the cell membrane. The enzyme catalyses Fe(II)-heme o + 2 A + H2O = Fe(II)-heme a + 2 AH2. It functions in the pathway porphyrin-containing compound metabolism; heme A biosynthesis; heme A from heme O: step 1/1. Catalyzes the conversion of heme O to heme A by two successive hydroxylations of the methyl group at C8. The first hydroxylation forms heme I, the second hydroxylation results in an unstable dihydroxymethyl group, which spontaneously dehydrates, resulting in the formyl group of heme A. The polypeptide is Heme A synthase (Rhodopseudomonas palustris (strain BisB18)).